A 101-amino-acid chain; its full sequence is Small ribosomal subunit protein uS14A (101 aa).

The segment at 31-59 (IRSPASSPEQRVAAQSELNRQPRDASAVR) is disordered.

The protein belongs to the universal ribosomal protein uS14 family. In terms of assembly, part of the 30S ribosomal subunit. Contacts proteins S3 and S10.

Its function is as follows. Binds 16S rRNA, required for the assembly of 30S particles and may also be responsible for determining the conformation of the 16S rRNA at the A site. The polypeptide is Small ribosomal subunit protein uS14A (Mycobacteroides abscessus (strain ATCC 19977 / DSM 44196 / CCUG 20993 / CIP 104536 / JCM 13569 / NCTC 13031 / TMC 1543 / L948) (Mycobacterium abscessus)).